The sequence spans 296 residues: Nucleotide-binding protein M6_Spy0559 (296 aa).

13–20 (GMSGAGKT) serves as a coordination point for ATP. 63-66 (DMRS) contacts GTP.

Belongs to the RapZ-like family.

Functionally, displays ATPase and GTPase activities. The protein is Nucleotide-binding protein M6_Spy0559 of Streptococcus pyogenes serotype M6 (strain ATCC BAA-946 / MGAS10394).